Reading from the N-terminus, the 833-residue chain is Leucine--tRNA ligase (833 aa).

Positions 41–52 (PYPSGAGLHVGH) match the 'HIGH' region motif. The 'KMSKS' region signature appears at 610 to 614 (KMSKS). Lysine 613 serves as a coordination point for ATP.

Belongs to the class-I aminoacyl-tRNA synthetase family.

The protein resides in the cytoplasm. The catalysed reaction is tRNA(Leu) + L-leucine + ATP = L-leucyl-tRNA(Leu) + AMP + diphosphate. The protein is Leucine--tRNA ligase of Streptococcus suis (strain 98HAH33).